Reading from the N-terminus, the 1061-residue chain is Calcium-transporting ATPase 4, endoplasmic reticulum-type (1061 aa).

The interval 1–21 is disordered; that stretch reads MGKGGEDCGNKQTNSSELVKS. Topologically, residues 1–70 are cytoplasmic; it reads MGKGGEDCGN…NELEKPEGTS (70 aa). A helical membrane pass occupies residues 71 to 91; sequence IFKLILEQFNDTLVRILLAAA. The Lumenal segment spans residues 92–115; that stretch reads VISFVLAFFDGDEGGEMGITAFVE. Residues 116 to 135 traverse the membrane as a helical segment; sequence PLVIFLILIVNAIVGIWQET. Topologically, residues 136-278 are cytoplasmic; sequence NAEKALEALK…EEDTPLKKKL (143 aa). Residues 279-298 form a helical membrane-spanning segment; the sequence is NEFGEVLTMIIGLICALVWL. Topologically, residues 299 to 327 are lumenal; sequence INVKYFLSWEYVDGWPRNFKFSFEKCTYY. Residues 328–345 form a helical membrane-spanning segment; that stretch reads FEIAVALAVAAIPEGLPA. Residues valine 336, alanine 337, isoleucine 339, and glutamate 341 each coordinate Ca(2+). The Cytoplasmic segment spans residues 346 to 786; the sequence is VITTCLALGT…GEGRSIYNNM (441 aa). The active-site 4-aspartylphosphate intermediate is aspartate 383. Positions 731 and 735 each coordinate Mg(2+). A helical membrane pass occupies residues 787-806; sequence KAFIRYMISSNIGEVASIFL. Residues asparagine 797 and glutamate 800 each coordinate Ca(2+). The Lumenal portion of the chain corresponds to 807–816; sequence TAALGIPEGM. The helical transmembrane segment at 817 to 837 threads the bilayer; the sequence is IPVQLLWVNLVTDGPPATALG. Residues asparagine 825, threonine 828, and aspartate 829 each contribute to the Ca(2+) site. At 838 to 857 the chain is on the cytoplasmic side; the sequence is FNPPDKDIMKKPPRRSDDSL. The chain crosses the membrane as a helical span at residues 858 to 880; sequence ITAWILFRYMVIGLYVGVATVGV. The Lumenal portion of the chain corresponds to 881–950; the sequence is FIIWYTHNSF…YFQQGKIKAS (70 aa). A helical transmembrane segment spans residues 951–970; that stretch reads TLSLSVLVAIEMFNSLNALS. A Ca(2+)-binding site is contributed by glutamate 961. Residues 971 to 983 lie on the Cytoplasmic side of the membrane; that stretch reads EDGSLVTMPPWVN. Residues 984 to 1002 form a helical membrane-spanning segment; it reads PWLLLAMAVSFGLHFVILY. At 1003–1017 the chain is on the lumenal side; the sequence is VPFLAQVFGIVPLSL. The helical transmembrane segment at 1018-1038 threads the bilayer; the sequence is NEWLLVLAVSLPVILIDEVLK. The Cytoplasmic portion of the chain corresponds to 1039 to 1061; that stretch reads FVGRCTSGYRYSPRTPSAKQKEE.

This sequence belongs to the cation transport ATPase (P-type) (TC 3.A.3) family. Type IIA subfamily.

The protein resides in the membrane. It carries out the reaction Ca(2+)(in) + ATP + H2O = Ca(2+)(out) + ADP + phosphate + H(+). In terms of biological role, this magnesium-dependent enzyme catalyzes the hydrolysis of ATP coupled with the translocation of calcium from the cytosol to an endomembrane compartment. This Arabidopsis thaliana (Mouse-ear cress) protein is Calcium-transporting ATPase 4, endoplasmic reticulum-type (ECA4).